A 410-amino-acid polypeptide reads, in one-letter code: Protein trichome birefringence-like 34 (410 aa).

A helical; Signal-anchor for type II membrane protein transmembrane segment spans residues 13 to 33 (TSFHTIAAVLVAGLIFTAVFL). The GDS motif signature appears at 133–135 (GDS). A DCXHWCLPGXXDXWN motif motif is present at residues 383 to 397 (DCIHWCLPGVPDVWN).

Belongs to the PC-esterase family. TBL subfamily.

It is found in the golgi apparatus membrane. May act as a bridging protein that binds pectin and other cell wall polysaccharides. Probably involved in maintaining esterification of pectins. May be involved in the specific O-acetylation of cell wall polymers. This is Protein trichome birefringence-like 34 (TBL34) from Arabidopsis thaliana (Mouse-ear cress).